Consider the following 308-residue polypeptide: Cytochrome b (308 aa).

Transmembrane regions (helical) follow at residues 1 to 21, 45 to 66, 81 to 101, and 146 to 166; these read FGSL…LMAM, WLIR…YLHI, WNTG…GYVL, and FFAL…IHLT. Heme b is bound by residues histidine 51 and histidine 65. 2 residues coordinate heme b: histidine 150 and histidine 164. Histidine 169 contacts a ubiquinone. A run of 3 helical transmembrane segments spans residues 194-214, 256-276, and 288-308; these read TKDI…AMFS, LGGV…PFLH, and LSQL…WVGS.

Belongs to the cytochrome b family. As to quaternary structure, the cytochrome bc1 complex contains 11 subunits: 3 respiratory subunits (MT-CYB, CYC1 and UQCRFS1), 2 core proteins (UQCRC1 and UQCRC2) and 6 low-molecular weight proteins (UQCRH/QCR6, UQCRB/QCR7, UQCRQ/QCR8, UQCR10/QCR9, UQCR11/QCR10 and a cleavage product of UQCRFS1). This cytochrome bc1 complex then forms a dimer. It depends on heme b as a cofactor.

Its subcellular location is the mitochondrion inner membrane. In terms of biological role, component of the ubiquinol-cytochrome c reductase complex (complex III or cytochrome b-c1 complex) that is part of the mitochondrial respiratory chain. The b-c1 complex mediates electron transfer from ubiquinol to cytochrome c. Contributes to the generation of a proton gradient across the mitochondrial membrane that is then used for ATP synthesis. The chain is Cytochrome b (MT-CYB) from Asthenes dorbignyi (Creamy-breasted canastero).